The chain runs to 282 residues: Putative 23S rRNA (guanine-N(1)-)-methyltransferase YxjB (282 aa).

Positions 12, 15, 29, and 34 each coordinate Zn(2+). 103-104 (EG) lines the S-adenosyl-L-methionine pocket.

This sequence belongs to the methyltransferase superfamily. RlmA family.

The polypeptide is Putative 23S rRNA (guanine-N(1)-)-methyltransferase YxjB (yxjB) (Bacillus subtilis (strain 168)).